A 100-amino-acid polypeptide reads, in one-letter code: Large ribosomal subunit protein bL27 (100 aa).

The propeptide occupies 1 to 13; sequence MNKLYWLTDLQLF. The span at 18 to 29 shows a compositional bias: basic and acidic residues; sequence GVDSSKNGRDSN. The interval 18-39 is disordered; the sequence is GVDSSKNGRDSNPKYLGAKLGD.

Belongs to the bacterial ribosomal protein bL27 family. In terms of processing, the N-terminus is cleaved by ribosomal processing cysteine protease Prp.

In Ureaplasma urealyticum serovar 10 (strain ATCC 33699 / Western), this protein is Large ribosomal subunit protein bL27.